Here is a 638-residue protein sequence, read N- to C-terminus: MSKQEEISKYGAKNIQFLEGLEAVRKRPGMYIGSIGFRGLHHLIWEIVDNSVDEAMAGFATNIEVKLHPNNEIEVIDNGRGMPVDIHPTTKKSAVETILTVLYAGGKFDSTNYKVSGGLHGVGVSVVNALSDSFEVWVKRGGKFYYQKYINGGHPVKPLEVIGEVNKDETGTRIKFHPDYQIMDKVAFDFGTIIDHAKQIAYLNKGLSISCEDITKNTIRNFCFEGGIIDYVSELNRGKKVIIPDIIYAEGTFRDKTPNAQDVIVNVAIQYNETYTSNIVSYANNIQTGEGGTHEQGFYDALTRIYNKYAEDNKLFKNNNEKISREDTKDGLVAIISIKHTDPIFEGQTKGKLENKDARIATNKIISEQLERYMAENPSHAKAIIEKCLLTQRSRLAANAAREASRKKEGSEFGNLPGKLADCSSKNAEVRELFIVEGNSAGGSAKMGRDRATQAILPLRGKIINAEKQDFTSVMSNKEVSSMIHALGTGITDEFNINKLKYHKIVIMTDADVDGAHIATLLLTFFYRYMRPLIEYGFVYIAQPPLYKISTAKVTEYAYNDAQKEEILSKLEDSKNISIQRYKGLGEMDPEQLWETTMNPATRKYCKFKSMTLLAAIQSFQHWWVKKLNLVMTSFKKC.

Positions 431–545 (RELFIVEGNS…YGFVYIAQPP (115 aa)) constitute a Toprim domain. Residues Glu437, Asp510, and Asp512 each coordinate Mg(2+).

It belongs to the type II topoisomerase GyrB family. Heterotetramer, composed of two GyrA and two GyrB chains. In the heterotetramer, GyrA contains the active site tyrosine that forms a transient covalent intermediate with DNA, while GyrB binds cofactors and catalyzes ATP hydrolysis. It depends on Mg(2+) as a cofactor. Mn(2+) is required as a cofactor. Requires Ca(2+) as cofactor.

Its subcellular location is the cytoplasm. It carries out the reaction ATP-dependent breakage, passage and rejoining of double-stranded DNA.. Its function is as follows. A type II topoisomerase that negatively supercoils closed circular double-stranded (ds) DNA in an ATP-dependent manner to modulate DNA topology and maintain chromosomes in an underwound state. Negative supercoiling favors strand separation, and DNA replication, transcription, recombination and repair, all of which involve strand separation. Also able to catalyze the interconversion of other topological isomers of dsDNA rings, including catenanes and knotted rings. Type II topoisomerases break and join 2 DNA strands simultaneously in an ATP-dependent manner. The polypeptide is DNA gyrase subunit B (Metamycoplasma arthritidis (Mycoplasma arthritidis)).